A 197-amino-acid chain; its full sequence is FMN-dependent NADH:quinone oxidoreductase (197 aa).

Residues Ser-10, 16-18 (SQS), 93-96 (MYNF), and 137-140 (TRGG) each bind FMN.

Belongs to the azoreductase type 1 family. In terms of assembly, homodimer. It depends on FMN as a cofactor.

It carries out the reaction 2 a quinone + NADH + H(+) = 2 a 1,4-benzosemiquinone + NAD(+). The enzyme catalyses N,N-dimethyl-1,4-phenylenediamine + anthranilate + 2 NAD(+) = 2-(4-dimethylaminophenyl)diazenylbenzoate + 2 NADH + 2 H(+). Quinone reductase that provides resistance to thiol-specific stress caused by electrophilic quinones. Its function is as follows. Also exhibits azoreductase activity. Catalyzes the reductive cleavage of the azo bond in aromatic azo compounds to the corresponding amines. The polypeptide is FMN-dependent NADH:quinone oxidoreductase (Shewanella frigidimarina (strain NCIMB 400)).